The sequence spans 529 residues: Bifunctional purine biosynthesis protein PurH (529 aa).

The 148-residue stretch at 2-149 (TDLVPLRRAL…KNHSFVTVLT (148 aa)) folds into the MGS-like domain.

This sequence belongs to the PurH family.

It carries out the reaction (6R)-10-formyltetrahydrofolate + 5-amino-1-(5-phospho-beta-D-ribosyl)imidazole-4-carboxamide = 5-formamido-1-(5-phospho-D-ribosyl)imidazole-4-carboxamide + (6S)-5,6,7,8-tetrahydrofolate. The catalysed reaction is IMP + H2O = 5-formamido-1-(5-phospho-D-ribosyl)imidazole-4-carboxamide. The protein operates within purine metabolism; IMP biosynthesis via de novo pathway; 5-formamido-1-(5-phospho-D-ribosyl)imidazole-4-carboxamide from 5-amino-1-(5-phospho-D-ribosyl)imidazole-4-carboxamide (10-formyl THF route): step 1/1. Its pathway is purine metabolism; IMP biosynthesis via de novo pathway; IMP from 5-formamido-1-(5-phospho-D-ribosyl)imidazole-4-carboxamide: step 1/1. The polypeptide is Bifunctional purine biosynthesis protein PurH (Dinoroseobacter shibae (strain DSM 16493 / NCIMB 14021 / DFL 12)).